A 147-amino-acid polypeptide reads, in one-letter code: uncharacterized protein (147 aa).

The protein belongs to the MG185/MG260 family.

This is an uncharacterized protein from Mycoplasma pneumoniae (strain ATCC 29342 / M129 / Subtype 1) (Mycoplasmoides pneumoniae).